The sequence spans 163 residues: UPF0763 protein CJJ81176_1011 (163 aa).

It belongs to the UPF0763 family.

The protein is UPF0763 protein CJJ81176_1011 of Campylobacter jejuni subsp. jejuni serotype O:23/36 (strain 81-176).